The primary structure comprises 372 residues: Cyclin-A3-2 (372 aa).

The tract at residues 53-73 (NQKKETQKPKRNLKPPPAKQI) is disordered.

It belongs to the cyclin family. Cyclin AB subfamily.

The sequence is that of Cyclin-A3-2 (CYCA3-2) from Arabidopsis thaliana (Mouse-ear cress).